The chain runs to 355 residues: UDP-N-acetylglucosamine--N-acetylmuramyl-(pentapeptide) pyrophosphoryl-undecaprenol N-acetylglucosamine transferase (355 aa).

Residues 13–15, Asn125, Arg162, Ser190, Ile244, and Gln289 each bind UDP-N-acetyl-alpha-D-glucosamine; that span reads TGG.

Belongs to the glycosyltransferase 28 family. MurG subfamily.

The protein localises to the cell inner membrane. The enzyme catalyses di-trans,octa-cis-undecaprenyl diphospho-N-acetyl-alpha-D-muramoyl-L-alanyl-D-glutamyl-meso-2,6-diaminopimeloyl-D-alanyl-D-alanine + UDP-N-acetyl-alpha-D-glucosamine = di-trans,octa-cis-undecaprenyl diphospho-[N-acetyl-alpha-D-glucosaminyl-(1-&gt;4)]-N-acetyl-alpha-D-muramoyl-L-alanyl-D-glutamyl-meso-2,6-diaminopimeloyl-D-alanyl-D-alanine + UDP + H(+). The protein operates within cell wall biogenesis; peptidoglycan biosynthesis. In terms of biological role, cell wall formation. Catalyzes the transfer of a GlcNAc subunit on undecaprenyl-pyrophosphoryl-MurNAc-pentapeptide (lipid intermediate I) to form undecaprenyl-pyrophosphoryl-MurNAc-(pentapeptide)GlcNAc (lipid intermediate II). This Neisseria meningitidis serogroup B (strain ATCC BAA-335 / MC58) protein is UDP-N-acetylglucosamine--N-acetylmuramyl-(pentapeptide) pyrophosphoryl-undecaprenol N-acetylglucosamine transferase.